Consider the following 81-residue polypeptide: ATP synthase subunit c (81 aa).

2 helical membrane passes run 7–27 (AASV…PGLG) and 57–77 (LAFM…LLFA).

The protein belongs to the ATPase C chain family. As to quaternary structure, F-type ATPases have 2 components, F(1) - the catalytic core - and F(0) - the membrane proton channel. F(1) has five subunits: alpha(3), beta(3), gamma(1), delta(1), epsilon(1). F(0) has four main subunits: a(1), b(1), b'(1) and c(10-14). The alpha and beta chains form an alternating ring which encloses part of the gamma chain. F(1) is attached to F(0) by a central stalk formed by the gamma and epsilon chains, while a peripheral stalk is formed by the delta, b and b' chains.

It localises to the cellular thylakoid membrane. Its function is as follows. F(1)F(0) ATP synthase produces ATP from ADP in the presence of a proton or sodium gradient. F-type ATPases consist of two structural domains, F(1) containing the extramembraneous catalytic core and F(0) containing the membrane proton channel, linked together by a central stalk and a peripheral stalk. During catalysis, ATP synthesis in the catalytic domain of F(1) is coupled via a rotary mechanism of the central stalk subunits to proton translocation. Key component of the F(0) channel; it plays a direct role in translocation across the membrane. A homomeric c-ring of between 10-14 subunits forms the central stalk rotor element with the F(1) delta and epsilon subunits. This chain is ATP synthase subunit c, found in Synechococcus sp. (strain JA-3-3Ab) (Cyanobacteria bacterium Yellowstone A-Prime).